Consider the following 143-residue polypeptide: Submaxillary gland androgen-regulated protein 2, isoform delta (143 aa).

The N-terminal stretch at 1–22 (MKPLCLVFGLCVLIGCFLSSEC) is a signal peptide. Disordered regions lie at residues 28-52 (GQHD…PDPN) and 116-143 (VPRK…TDSF). Polar residues-rich tracts occupy residues 36 to 45 (LSPSNPSSHF) and 122 to 143 (NATP…TDSF).

It localises to the secreted. Its function is as follows. May play a role in protection or detoxification. In Mus musculus (Mouse), this protein is Submaxillary gland androgen-regulated protein 2, isoform delta (Smr2).